Here is a 363-residue protein sequence, read N- to C-terminus: Phosphoserine aminotransferase (363 aa).

Arginine 42 contributes to the L-glutamate binding site. Positions 105, 155, 175, and 198 each coordinate pyridoxal 5'-phosphate. At lysine 199 the chain carries N6-(pyridoxal phosphate)lysine. Asparagine 240–threonine 241 contributes to the pyridoxal 5'-phosphate binding site.

It belongs to the class-V pyridoxal-phosphate-dependent aminotransferase family. SerC subfamily. In terms of assembly, homodimer. Requires pyridoxal 5'-phosphate as cofactor.

The protein localises to the cytoplasm. The enzyme catalyses O-phospho-L-serine + 2-oxoglutarate = 3-phosphooxypyruvate + L-glutamate. The catalysed reaction is 4-(phosphooxy)-L-threonine + 2-oxoglutarate = (R)-3-hydroxy-2-oxo-4-phosphooxybutanoate + L-glutamate. It functions in the pathway amino-acid biosynthesis; L-serine biosynthesis; L-serine from 3-phospho-D-glycerate: step 2/3. The protein operates within cofactor biosynthesis; pyridoxine 5'-phosphate biosynthesis; pyridoxine 5'-phosphate from D-erythrose 4-phosphate: step 3/5. Functionally, catalyzes the reversible conversion of 3-phosphohydroxypyruvate to phosphoserine and of 3-hydroxy-2-oxo-4-phosphonooxybutanoate to phosphohydroxythreonine. The sequence is that of Phosphoserine aminotransferase from Janthinobacterium sp. (strain Marseille) (Minibacterium massiliensis).